Here is a 413-residue protein sequence, read N- to C-terminus: Falstatin (413 aa).

Positions 1–21 (MNLLVFFCFFLLSCIVHLSRC) are cleaved as a signal peptide. The short motif at 284 to 294 (LDSVNGNGFVW) is the BC loop; binds and inhibits the active site cavity of cysteine proteases element. Composition is skewed to polar residues over residues 325 to 339 (ISVT…NSNT) and 346 to 360 (NNKQ…TTNH). Residues 325–367 (ISVTNPVPIPKNSNTNKDDSINNKQDGSQNNTTTNHFPKPREQ) form a disordered region.

The protein belongs to the protease inhibitor I71 family. As to quaternary structure, oligomer; probably composed of 10 monomers. In terms of processing, proteolytically cleaved.

It is found in the secreted. It localises to the cytoplasmic vesicle. The protein resides in the secretory vesicle. Its subcellular location is the microneme. The protein localises to the parasitophorous vacuole lumen. It is found in the host cytoplasm. Its function is as follows. Cysteine protease inhibitor. Inhibits cysteine protease falcipains FP2 and FP3. Required for the invasion of host erythrocytes by merozoites. In the mosquito vector, essential for the gliding motility of hemocoel sporozoites and, therefore, for salivary gland invasion and the subsequent transmission from the mosquito to the mammalian host. Required for the invasion of host hepatocytes. During the liver stage, may prevent host hepatocyte cell death likely by inhibiting host cysteine proteases. The sequence is that of Falstatin from Plasmodium falciparum (isolate 3D7).